The following is a 644-amino-acid chain: VKVELDKKVQSLQDEVAFLRTNHEEEVADLLAQIQASHITVERKDYLKTDISSALKEIRSQLECHSDQNMHQAEEWFKCRYAKLTEAAEQNKEAIRSAKEEIAEYRRQLQSKSIELESVAWHKESLERHVSDIEERHNHDLSSYQDTIQQLENELRGTKWEMARHLREYQDLLNVKMALDIEIAAYRKLLEGEETRFSTFSGSITGPLYTHRQPSVTISSKIQKTKVEAPKLKVQHKFVEEIIEETKVEDEKSEMEDALTAIAEELAVSVKEEEKEEEAEGKEEEQEAEEEVAAAKKSPVKATTPEIKEEEGEKEEEGQEEEEEEEDEGVKSDQAEEGGSEKEGSSKNEGEQEEGETEAEGEVEEAEAKEEKKTEEKSEEVAAKEEPVTEAKVGKPEKAKSPVPKSPVEEVKPKAEATAGKGEQKEEEEKVEEEKKKAAKESPKEEKVEKKEEKPKDVPKKKAESPVKEEAAEEAATITKPTKVGLEKETKEGEKPLQQEKEKEKAGEEGGSEEEGSDQGSKRAKKEDIAVNGEGEGKEEEEPETKEKGSGREEEKGVVTNGLDLSPADEKKGGDRSEEKVVVTKKVEKITTEGGDGATKYITKSVTAQKVEEHEETFEEKLVSTKKVEKVTSHAIVKEVTQSD.

Residues 1–33 (VKVELDKKVQSLQDEVAFLRTNHEEEVADLLAQ) are coil 1B. The IF rod domain occupies 1–197 (VKVELDKKVQ…KLLEGEETRF (197 aa)). Position 11 is a phosphoserine (serine 11). Positions 34 to 50 (IQASHITVERKDYLKTD) are linker 12. A coil 2A region spans residues 51–72 (ISSALKEIRSQLECHSDQNMHQ). Positions 73 to 76 (AEEW) are linker 2. The tract at residues 77–197 (FKCRYAKLTE…KLLEGEETRF (121 aa)) is coil 2B. Tyrosine 105 bears the Phosphotyrosine mark. A phosphoserine mark is found at serine 131, serine 203, and serine 215. The tract at residues 198–643 (STFSGSITGP…HAIVKEVTQS (446 aa)) is tail. Threonine 217 is a glycosylation site (O-linked (GlcNAc) threonine). 2 positions are modified to phosphoserine: serine 253 and serine 269. The interval 270–582 (VKEEEKEEEA…GGDRSEEKVV (313 aa)) is disordered. Residues 274 to 292 (EKEEEAEGKEEEQEAEEEV) are compositionally biased toward acidic residues. Serine 298 bears the Phosphoserine mark. Residues 308-328 (KEEEGEKEEEGQEEEEEEEDE) are compositionally biased toward acidic residues. Residues 329 to 350 (GVKSDQAEEGGSEKEGSSKNEG) show a composition bias toward basic and acidic residues. Phosphoserine occurs at positions 332, 340, 345, and 346. Over residues 351-368 (EQEEGETEAEGEVEEAEA) the composition is skewed to acidic residues. The residue at position 357 (threonine 357) is a Phosphothreonine. The segment covering 369–400 (KEEKKTEEKSEEVAAKEEPVTEAKVGKPEKAK) has biased composition (basic and acidic residues). Serine 401, serine 406, serine 442, and serine 465 each carry phosphoserine. Residues 422–470 (GEQKEEEEKVEEEKKKAAKESPKEEKVEKKEEKPKDVPKKKAESPVKEE) are compositionally biased toward basic and acidic residues. Positions 474 to 483 (EAATITKPTK) are enriched in low complexity. Residues 485-508 (GLEKETKEGEKPLQQEKEKEKAGE) are compositionally biased toward basic and acidic residues. Phosphoserine occurs at positions 512, 550, and 566. A compositionally biased stretch (basic and acidic residues) spans 545–557 (TKEKGSGREEEKG). The span at 568-582 (ADEKKGGDRSEEKVV) shows a compositional bias: basic and acidic residues.

This sequence belongs to the intermediate filament family. In terms of assembly, forms heterodimers with NEFL; which can further hetero-oligomerize (in vitro). Forms heterodimers with INA (in vitro). In terms of processing, there are a number of repeats of the tripeptide K-S-P, NFM is phosphorylated on a number of the serines in this motif. It is thought that phosphorylation of NFM results in the formation of interfilament cross bridges that are important in the maintenance of axonal caliber. Phosphorylation seems to play a major role in the functioning of the larger neurofilament polypeptides (NF-M and NF-H), the levels of phosphorylation being altered developmentally and coincidentally with a change in the neurofilament function. Post-translationally, phosphorylated in the head and rod regions by the PKC kinase PKN1, leading to the inhibition of polymerization.

The protein localises to the cytoplasm. Its subcellular location is the cytoskeleton. It localises to the cell projection. The protein resides in the axon. In terms of biological role, neurofilaments usually contain three intermediate filament proteins: NEFL, NEFM, and NEFH which are involved in the maintenance of neuronal caliber. May additionally cooperate with the neuronal intermediate filament proteins PRPH and INA to form neuronal filamentous networks. The protein is Neurofilament medium polypeptide (NEFM) of Oryctolagus cuniculus (Rabbit).